A 143-amino-acid chain; its full sequence is Host transcription reprogramming factor 8 (143 aa).

The N-terminal stretch at 1–19 (MHTYKFIQIALLFASVALA) is a signal peptide. Residues 24-34 (PSPPNPPPVPQ) show a composition bias toward pro residues. The disordered stretch occupies residues 24–43 (PSPPNPPPVPQLPNSETKSN). The C2H2-type 1 zinc finger occupies 48–71 (HSCEFCGVVKPSGPAYLEHYHQNH). The disordered stretch occupies residues 77–99 (GKLATPSPPNPPPVPTQKVETHA). Residues 82–91 (PSPPNPPPVP) are compositionally biased toward pro residues. A C2H2-type 2 zinc finger spans residues 103–126 (HGCEWCNKVEPSGPAYIKHYKENH).

The protein localises to the secreted. The protein resides in the host nucleus. Its function is as follows. Probable secreted effector that translocates into the nuclei of host cells to reprogram the expression of targeted genes by binding on effector binding elements in rice. The protein is Host transcription reprogramming factor 8 of Pyricularia oryzae (strain 70-15 / ATCC MYA-4617 / FGSC 8958) (Rice blast fungus).